We begin with the raw amino-acid sequence, 214 residues long: Leucyl/phenylalanyl-tRNA--protein transferase (214 aa).

Residues 194-214 (FAPPGYSPDPASVVQRSSQTS) form a disordered region.

It belongs to the L/F-transferase family.

The protein resides in the cytoplasm. The enzyme catalyses N-terminal L-lysyl-[protein] + L-leucyl-tRNA(Leu) = N-terminal L-leucyl-L-lysyl-[protein] + tRNA(Leu) + H(+). It catalyses the reaction N-terminal L-arginyl-[protein] + L-leucyl-tRNA(Leu) = N-terminal L-leucyl-L-arginyl-[protein] + tRNA(Leu) + H(+). It carries out the reaction L-phenylalanyl-tRNA(Phe) + an N-terminal L-alpha-aminoacyl-[protein] = an N-terminal L-phenylalanyl-L-alpha-aminoacyl-[protein] + tRNA(Phe). In terms of biological role, functions in the N-end rule pathway of protein degradation where it conjugates Leu, Phe and, less efficiently, Met from aminoacyl-tRNAs to the N-termini of proteins containing an N-terminal arginine or lysine. This chain is Leucyl/phenylalanyl-tRNA--protein transferase, found in Cereibacter sphaeroides (strain ATCC 17025 / ATH 2.4.3) (Rhodobacter sphaeroides).